The sequence spans 67 residues: ATP synthase F(0) complex subunit 8 (67 aa).

Residues 8–24 (TWFITILSMLITLFILF) traverse the membrane as a helical segment. An N6-acetyllysine; alternate modification is found at K54. At K54 the chain carries N6-succinyllysine; alternate. K57 is modified (N6-acetyllysine).

The protein belongs to the ATPase protein 8 family. Component of the ATP synthase complex composed at least of ATP5F1A/subunit alpha, ATP5F1B/subunit beta, ATP5MC1/subunit c (homooctomer), MT-ATP6/subunit a, MT-ATP8/subunit 8, ATP5ME/subunit e, ATP5MF/subunit f, ATP5MG/subunit g, ATP5MK/subunit k, ATP5MJ/subunit j, ATP5F1C/subunit gamma, ATP5F1D/subunit delta, ATP5F1E/subunit epsilon, ATP5PF/subunit F6, ATP5PB/subunit b, ATP5PD/subunit d, ATP5PO/subunit OSCP. ATP synthase complex consists of a soluble F(1) head domain (subunits alpha(3) and beta(3)) - the catalytic core - and a membrane F(0) domain - the membrane proton channel (subunits c, a, 8, e, f, g, k and j). These two domains are linked by a central stalk (subunits gamma, delta, and epsilon) rotating inside the F1 region and a stationary peripheral stalk (subunits F6, b, d, and OSCP). Interacts with PRICKLE3.

It is found in the mitochondrion membrane. In terms of biological role, subunit 8, of the mitochondrial membrane ATP synthase complex (F(1)F(0) ATP synthase or Complex V) that produces ATP from ADP in the presence of a proton gradient across the membrane which is generated by electron transport complexes of the respiratory chain. ATP synthase complex consist of a soluble F(1) head domain - the catalytic core - and a membrane F(1) domain - the membrane proton channel. These two domains are linked by a central stalk rotating inside the F(1) region and a stationary peripheral stalk. During catalysis, ATP synthesis in the catalytic domain of F(1) is coupled via a rotary mechanism of the central stalk subunits to proton translocation. In vivo, can only synthesize ATP although its ATP hydrolase activity can be activated artificially in vitro. Part of the complex F(0) domain. This Dugong dugon (Dugong) protein is ATP synthase F(0) complex subunit 8.